The following is a 93-amino-acid chain: Putative aspartate aminotransferase (93 aa).

Belongs to the class-I pyridoxal-phosphate-dependent aminotransferase family. In terms of assembly, homodimer. It depends on pyridoxal 5'-phosphate as a cofactor.

The protein localises to the cytoplasm. It catalyses the reaction L-aspartate + 2-oxoglutarate = oxaloacetate + L-glutamate. This Methylorubrum extorquens (Methylobacterium dichloromethanicum) protein is Putative aspartate aminotransferase.